The primary structure comprises 242 residues: 1-(5-phosphoribosyl)-5-[(5-phosphoribosylamino)methylideneamino] imidazole-4-carboxamide isomerase (242 aa).

D8 acts as the Proton acceptor in catalysis. Catalysis depends on D129, which acts as the Proton donor.

It belongs to the HisA/HisF family.

The protein localises to the cytoplasm. The enzyme catalyses 1-(5-phospho-beta-D-ribosyl)-5-[(5-phospho-beta-D-ribosylamino)methylideneamino]imidazole-4-carboxamide = 5-[(5-phospho-1-deoxy-D-ribulos-1-ylimino)methylamino]-1-(5-phospho-beta-D-ribosyl)imidazole-4-carboxamide. It functions in the pathway amino-acid biosynthesis; L-histidine biosynthesis; L-histidine from 5-phospho-alpha-D-ribose 1-diphosphate: step 4/9. The polypeptide is 1-(5-phosphoribosyl)-5-[(5-phosphoribosylamino)methylideneamino] imidazole-4-carboxamide isomerase (Dictyoglomus thermophilum (strain ATCC 35947 / DSM 3960 / H-6-12)).